A 332-amino-acid chain; its full sequence is Phosphatidylglycerol--prolipoprotein diacylglyceryl transferase (332 aa).

A run of 3 helical transmembrane segments spans residues 18–38 (FPYF…AYIL), 66–86 (FFTW…TMVY), and 111–131 (VGLR…GGGL). An a 1,2-diacyl-sn-glycero-3-phospho-(1'-sn-glycerol)-binding site is contributed by Arg-159. Transmembrane regions (helical) follow at residues 249-269 (GFLV…IEYF) and 302-322 (ILCV…SAYH).

Belongs to the Lgt family.

The protein resides in the cell inner membrane. It carries out the reaction L-cysteinyl-[prolipoprotein] + a 1,2-diacyl-sn-glycero-3-phospho-(1'-sn-glycerol) = an S-1,2-diacyl-sn-glyceryl-L-cysteinyl-[prolipoprotein] + sn-glycerol 1-phosphate + H(+). Its pathway is protein modification; lipoprotein biosynthesis (diacylglyceryl transfer). Functionally, catalyzes the transfer of the diacylglyceryl group from phosphatidylglycerol to the sulfhydryl group of the N-terminal cysteine of a prolipoprotein, the first step in the formation of mature lipoproteins. This chain is Phosphatidylglycerol--prolipoprotein diacylglyceryl transferase, found in Treponema pallidum (strain Nichols).